The primary structure comprises 249 residues: Anti-H(O) lectin 2 (249 aa).

N-linked (GlcNAc...) asparagine glycosylation is present at N118. E130 and D132 together coordinate Mn(2+). Positions 132, 134, 140, and 145 each coordinate Ca(2+). Positions 145 and 148 each coordinate Mn(2+). N245 carries an N-linked (GlcNAc...) asparagine glycan.

This sequence belongs to the leguminous lectin family.

In terms of biological role, di-N-acetylchitobiose specific lectin. This Ulex europaeus (Furze) protein is Anti-H(O) lectin 2.